A 111-amino-acid polypeptide reads, in one-letter code: WAP four-disulfide core domain protein 12 (111 aa).

A signal peptide spans 1-23 (MGSSSFLVLMVSLALVTLVAAEG). The 48-residue stretch at 27–74 (NIEKPGVCPADNIRCIKSDPPQCHTDQDCQGIRKCCYLHCGFKCVIPV) folds into the WAP domain. Intrachain disulfides connect C34–C62, C41–C66, C49–C61, and C55–C70. The tract at residues 80 to 111 (GGNKDEDVSRPCPEPGWEAKPPGVFSTRCPQK) is disordered.

It is found in the secreted. Its function is as follows. Antibacterial protein. Putative acid-stable proteinase inhibitor. This is WAP four-disulfide core domain protein 12 (WFDC12) from Callithrix jacchus (White-tufted-ear marmoset).